A 228-amino-acid polypeptide reads, in one-letter code: N-acetyltransferase family 8 member 3 (228 aa).

The next 2 membrane-spanning stretches (helical) occupy residues 36 to 56 (MLLL…LFLA) and 58 to 78 (GSWL…WLLA). One can recognise an N-acetyltransferase domain in the interval 61–217 (LLVLLSTLTL…RNSPMICLKY (157 aa)).

Belongs to the camello family.

Its subcellular location is the nucleus membrane. The protein localises to the cytoplasm. It is found in the perinuclear region. The enzyme catalyses L-lysyl-[protein] + acetyl-CoA = N(6)-acetyl-L-lysyl-[protein] + CoA + H(+). In terms of biological role, has histone acetyltransferase activity in vitro, with specificity for histone H4. The chain is N-acetyltransferase family 8 member 3 from Rattus norvegicus (Rat).